Reading from the N-terminus, the 826-residue chain is Receptor-like protein 18 (826 aa).

Residues 1 to 780 lie on the Extracellular side of the membrane; it reads MRCQVWNVIE…EEDEEEVISW (780 aa). LRR repeat units follow at residues 5–31, 32–54, 55–79, 81–103, 104–127, 128–150, and 151–177; these read VWNV…IFSL, QNLR…SLGN, FSSL…LGNL, HLTS…LGNL, SHLT…LGNL, SHLT…SFEN, and LSHL…SFNQ. Asn-12 and Asn-54 each carry an N-linked (GlcNAc...) asparagine glycan. Residues Asn-102, Asn-126, and Asn-150 are each glycosylated (N-linked (GlcNAc...) asparagine). The LRR 8; degenerate repeat unit spans residues 178–198; that stretch reads LVSLAVEENEFTGNFLLILLN. Residues Asn-198, Asn-201, and Asn-219 are each glycosylated (N-linked (GlcNAc...) asparagine). LRR repeat units follow at residues 199–223, 225–247, 248–271, 273–294, 296–318, 319–343, 345–368, 382–405, 406–429, 430–452, 455–478, 479–500, 501–524, 525–550, 552–570, 571–594, 637–661, 662–685, 686–709, and 711–734; these read LTNL…MSSL, NLVL…LLNI, PSLS…NISS, LSDL…ISKL, NLYT…IFSD, LKLL…TFLS, FKSL…SVSN, PLLL…LRTQ, QTME…LWTL, PTLD…MVPS, QPSM…FICA, FTLQ…ENIS, ESLK…LVRI, SSLE…SLEE, QVLV…QTRF, PNLR…FFVN, LKIF…IGLL, KELH…MGKL, RELE…LGDL, and YLAY…QFLT. N-linked (GlcNAc...) asparagine glycosylation is present at Asn-268. Residues Asn-312, Asn-331, Asn-362, and Asn-389 are each glycosylated (N-linked (GlcNAc...) asparagine). N-linked (GlcNAc...) asparagine glycosylation is found at Asn-436, Asn-439, Asn-467, and Asn-498. An N-linked (GlcNAc...) asparagine glycan is attached at Asn-538. N-linked (GlcNAc...) asparagine glycosylation is found at Asn-584 and Asn-594. Residue Asn-668 is glycosylated (N-linked (GlcNAc...) asparagine). Residues Asn-716 and Asn-736 are each glycosylated (N-linked (GlcNAc...) asparagine). A helical membrane pass occupies residues 781-801; that stretch reads IAATIGFIPGIAFGLMMGYIL. The Cytoplasmic portion of the chain corresponds to 802–826; it reads VCYKPEWFMNVFGKNKSRSTSSTTR.

This sequence belongs to the RLP family.

The protein resides in the cell membrane. The protein is Receptor-like protein 18 of Arabidopsis thaliana (Mouse-ear cress).